The primary structure comprises 479 residues: Replication factor C large subunit (479 aa).

An ATP-binding site is contributed by 43 to 50 (GPPGVGKT). The disordered stretch occupies residues 441-479 (EEKEESVEEVAEEKPEEEREEPRARKKAGKNLTLDSFFS). Basic and acidic residues predominate over residues 452–463 (EEKPEEEREEPR).

It belongs to the activator 1 small subunits family. RfcL subfamily. Heteropentamer composed of four small subunits (RfcS) and one large subunit (RfcL). Both subunits interact with PCNA.

In terms of biological role, part of the RFC clamp loader complex which loads the PCNA sliding clamp onto DNA. The complex possesses DNA-dependent ATPase activity which is further stimulated by PCNA. The sequence is that of Replication factor C large subunit (rfcL) from Archaeoglobus fulgidus (strain ATCC 49558 / DSM 4304 / JCM 9628 / NBRC 100126 / VC-16).